A 151-amino-acid polypeptide reads, in one-letter code: Transcriptional regulator MraZ (151 aa).

SpoVT-AbrB domains lie at 5–56 (THRH…PLPT) and 85–128 (SEEL…DAAR).

It belongs to the MraZ family. In terms of assembly, forms oligomers.

It localises to the cytoplasm. The protein localises to the nucleoid. The sequence is that of Transcriptional regulator MraZ from Acidithiobacillus ferrooxidans (strain ATCC 23270 / DSM 14882 / CIP 104768 / NCIMB 8455) (Ferrobacillus ferrooxidans (strain ATCC 23270)).